A 363-amino-acid chain; its full sequence is Sorting nexin-21 (363 aa).

Residues 1–11 (MASRLLHRLRH) show a composition bias toward basic residues. The disordered stretch occupies residues 1–99 (MASRLLHRLR…PPPDGQRSSQ (99 aa)). The segment covering 12 to 28 (ALASDGPGEAAAGPEAE) has biased composition (low complexity). Polar residues predominate over residues 46-56 (SRLSGTLSFTS). Over residues 57–71 (AEDDPDDEDEDDEAG) the composition is skewed to acidic residues. The PX domain occupies 119–236 (QRLLFEVTSA…DFFVLPELRR (118 aa)). Arg161, Ser163, Lys188, and Arg202 together coordinate a 1,2-diacyl-sn-glycero-3-phospho-(1D-myo-inositol-3-phosphate).

It belongs to the sorting nexin family. In terms of assembly, monomer.

The protein resides in the cytoplasmic vesicle membrane. Its subcellular location is the early endosome membrane. Binds to membranes enriched in phosphatidylinositol 3-phosphate (PtdIns(P3)) and phosphatidylinositol 4,5-bisphosphate. May be involved in several stages of intracellular trafficking. In Mus musculus (Mouse), this protein is Sorting nexin-21.